The chain runs to 1074 residues: Semaphorin-5A (1074 aa).

Positions 1–22 are cleaved as a signal peptide; the sequence is MKGACILAWLFSSLGVWRLARP. The region spanning 35–484 is the Sema domain; sequence HPVVSYKEIG…LQEHVVKIPL (450 aa). Cystine bridges form between Cys104–Cys114 and Cys131–Cys140. N-linked (GlcNAc...) asparagine glycans are attached at residues Asn147, Asn168, Asn227, and Asn277. 2 cysteine pairs are disulfide-bonded: Cys254–Cys357 and Cys278–Cys320. N-linked (GlcNAc...) asparagine glycans are attached at residues Asn323 and Asn367. Residues 486–533 enclose the PSI domain; that stretch reads RCHFHQTRGACIGAQDPYCGWDAVMKKCTSLEESLSMTQWDQSVPTCP. N-linked (GlcNAc...) asparagine glycosylation is found at Asn536 and Asn591. 3 TSP type-1 domains span residues 540–593, 595–651, and 653–702; these read DGSF…TNCS, NGGW…LLCP, and HVFW…NACP. 6 disulfides stabilise this stretch: Cys607-Cys644, Cys611-Cys650, Cys622-Cys634, Cys665-Cys696, Cys669-Cys701, and Cys680-Cys686. N-linked (GlcNAc...) asparagine glycosylation occurs at Asn717. TSP type-1 domains lie at 784–839, 841–896, and 897–944; these read NGAW…LPCP, DGVW…QTCP, and ENWS…VFDS. Cystine bridges form between Cys796/Cys833, Cys800/Cys838, Cys811/Cys823, Cys853/Cys890, Cys857/Cys895, and Cys868/Cys880. N-linked (GlcNAc...) asparagine glycans are attached at residues Asn898 and Asn933. Residues 969–989 form a helical membrane-spanning segment; the sequence is FHMMAVGLSSSILGCLLTLLV. Asn1015 carries N-linked (GlcNAc...) asparagine glycosylation.

Binds PLXNB3.

The protein resides in the membrane. Its function is as follows. Bifunctional axonal guidance cue regulated by sulfated proteoglycans; attractive effects result from interactions with heparan sulfate proteoglycans (HSPGs), while the inhibitory effects depend on interactions with chondroitin sulfate proteoglycans (CSPGs). Ligand for receptor PLXNB3. In glioma cells, SEMA5A stimulation of PLXNB3 results in the disassembly of F-actin stress fibers, disruption of focal adhesions and cellular collapse as well as inhibition of cell migration and invasion through ARHGDIA-mediated inactivation of RAC1. May promote angiogenesis by increasing endothelial cell proliferation and migration and inhibiting apoptosis. This Rattus norvegicus (Rat) protein is Semaphorin-5A (Sema5a).